A 154-amino-acid chain; its full sequence is MQAVQVKVLNPKITEDKAFSLPTRATDGSAGIDLRACIDEPLTIKAGATHLIGTGLAVYIQDPNFAGMILPRSGLGHKHGIVLGNLVGLIDADYQGELMVSIWNRSQEDFVLTPAERMAQYVVVPVARPEFEVVTEFSDTSARGAGGFGHSGRQ.

Residues Arg-72 to Gly-74, Asn-85, Leu-89 to Asp-91, and Met-99 each bind substrate.

The protein belongs to the dUTPase family. Mg(2+) serves as cofactor.

The catalysed reaction is dUTP + H2O = dUMP + diphosphate + H(+). Its pathway is pyrimidine metabolism; dUMP biosynthesis; dUMP from dCTP (dUTP route): step 2/2. In terms of biological role, this enzyme is involved in nucleotide metabolism: it produces dUMP, the immediate precursor of thymidine nucleotides and it decreases the intracellular concentration of dUTP so that uracil cannot be incorporated into DNA. This chain is Deoxyuridine 5'-triphosphate nucleotidohydrolase, found in Psychrobacter cryohalolentis (strain ATCC BAA-1226 / DSM 17306 / VKM B-2378 / K5).